The chain runs to 70 residues: DNA-directed RNA polymerase subunit omega (70 aa).

Belongs to the RNA polymerase subunit omega family. As to quaternary structure, the RNAP catalytic core consists of 2 alpha, 1 beta, 1 beta' and 1 omega subunit. When a sigma factor is associated with the core the holoenzyme is formed, which can initiate transcription.

The catalysed reaction is RNA(n) + a ribonucleoside 5'-triphosphate = RNA(n+1) + diphosphate. Promotes RNA polymerase assembly. Latches the N- and C-terminal regions of the beta' subunit thereby facilitating its interaction with the beta and alpha subunits. The sequence is that of DNA-directed RNA polymerase subunit omega from Thermoanaerobacter pseudethanolicus (strain ATCC 33223 / 39E) (Clostridium thermohydrosulfuricum).